The following is a 361-amino-acid chain: Phosphoserine aminotransferase (361 aa).

R42 is a binding site for L-glutamate. Pyridoxal 5'-phosphate is bound by residues A76–T77, W102, T152, D172, and Q195. The residue at position 196 (K196) is an N6-(pyridoxal phosphate)lysine. N237–T238 serves as a coordination point for pyridoxal 5'-phosphate.

It belongs to the class-V pyridoxal-phosphate-dependent aminotransferase family. SerC subfamily. In terms of assembly, homodimer. Pyridoxal 5'-phosphate serves as cofactor.

It localises to the cytoplasm. The catalysed reaction is O-phospho-L-serine + 2-oxoglutarate = 3-phosphooxypyruvate + L-glutamate. It catalyses the reaction 4-(phosphooxy)-L-threonine + 2-oxoglutarate = (R)-3-hydroxy-2-oxo-4-phosphooxybutanoate + L-glutamate. It participates in amino-acid biosynthesis; L-serine biosynthesis; L-serine from 3-phospho-D-glycerate: step 2/3. Its pathway is cofactor biosynthesis; pyridoxine 5'-phosphate biosynthesis; pyridoxine 5'-phosphate from D-erythrose 4-phosphate: step 3/5. Functionally, catalyzes the reversible conversion of 3-phosphohydroxypyruvate to phosphoserine and of 3-hydroxy-2-oxo-4-phosphonooxybutanoate to phosphohydroxythreonine. This chain is Phosphoserine aminotransferase, found in Stenotrophomonas maltophilia (strain K279a).